The primary structure comprises 550 residues: Natural resistance-associated macrophage protein 1 (550 aa).

The interval 1 to 45 (MTGDKGPQRLSGSSYGSISSPTSPTSPGPQQAPPRETYLSEKIPI) is disordered. The Cytoplasmic segment spans residues 1–58 (MTGDKGPQRLSGSSYGSISSPTSPTSPGPQQAPPRETYLSEKIPIPDTKPGTFSLRKL). Residues 11-23 (SGSSYGSISSPTS) are compositionally biased toward low complexity. A helical membrane pass occupies residues 59-76 (WAFTGPGFLMSIAFLDPG). Residues 77–85 (NIESDLQAG) lie on the Extracellular side of the membrane. Residues 86–105 (AVAGFKLLWVLLWATVLGLL) traverse the membrane as a helical segment. The Cytoplasmic segment spans residues 106 to 142 (CQRLAARLGVVTGKDLGEVCHLYYPKVPRTVLWLTIE). Residues 143 to 163 (LAIVGSDMQEVIGTAIAFNLL) form a helical membrane-spanning segment. Residues 164-167 (SAGR) lie on the Extracellular side of the membrane. A helical transmembrane segment spans residues 168–187 (IPLWGGVLITIVDTFFFLFL). Residues 188 to 196 (DNYGLRKLE) are Cytoplasmic-facing. Residues 197 to 217 (AFFGLLITIMALTFGYEYVVA) form a helical membrane-spanning segment. Over 218–240 (RPEQGALLRGLFLPSCPGCGHPE) the chain is Extracellular. The chain crosses the membrane as a helical span at residues 241-259 (LLQAVGIVGAIIMPHNIYL). The Cytoplasmic portion of the chain corresponds to 260 to 287 (HSALVKSREIDRARRADIREANMYFLIE). A helical transmembrane segment spans residues 288–307 (ATIALSVSFIINLFVMAVFG). Topologically, residues 308–349 (QAFYQKTNQAAFNICANSSLHDYAKIFPMNNATVAVDIYQGG) are extracellular. 2 N-linked (GlcNAc...) asparagine glycosylation sites follow: Asn324 and Asn338. Residues 350-369 (VILGCLFGPAALYIWAIGLL) traverse the membrane as a helical segment. The Cytoplasmic segment spans residues 370 to 400 (AAGQSSTMTGTYAGQFVMEGFLRLRWSRFAR). Residues 401–418 (VLLTRSCAILPTVLVAVF) traverse the membrane as a helical segment. Residues 419–429 (RDLRDLSGLND) lie on the Extracellular side of the membrane. A helical membrane pass occupies residues 430-450 (LLNVLQSLLLPFAVLPILTFT). Topologically, residues 451–466 (SMPTLMQEFANGLLNK) are cytoplasmic. Residues 467–488 (VVTSSIMVLVCAINLYFVVSYL) form a helical membrane-spanning segment. The Extracellular portion of the chain corresponds to 489 to 496 (PSLPHPAY). Residues 497–516 (FGLAALLAAAYLGLSTYLVW) traverse the membrane as a helical segment. Over 517 to 550 (TCCLAHGATFLAHSSHHHFLYGLLEEDQKGETSG) the chain is Cytoplasmic.

Belongs to the NRAMP family. In terms of tissue distribution, macrophages; peripheral blood leukocytes, lung, spleen and liver.

Its subcellular location is the late endosome membrane. It localises to the lysosome membrane. It carries out the reaction Zn(2+)(in) + H(+)(out) = Zn(2+)(out) + H(+)(in). The catalysed reaction is Fe(2+)(in) + H(+)(out) = Fe(2+)(out) + H(+)(in). It catalyses the reaction Mn(2+)(in) + H(+)(out) = Mn(2+)(out) + H(+)(in). Functionally, macrophage-specific antiporter that fluxes metal ions in either direction against a proton gradient. Localized to late endosomal lysosomal membranes, delivers bivalent cations from the cytosol into these acidic compartments where they may directly affect antimicrobial activity. Involved in iron metabolism and host natural resistance to infection with intracellular parasites. Pathogen resistance involves sequestration of Fe(2+) and Mn(2+), cofactors of both prokaryotic and eukaryotic catalases and superoxide dismutases, not only to protect the macrophage against its own generation of reactive oxygen species, but to deny the cations to the pathogen for synthesis of its protective enzymes. The chain is Natural resistance-associated macrophage protein 1 from Homo sapiens (Human).